The primary structure comprises 176 residues: Disulfide bond formation protein B (176 aa).

Topologically, residues 1–14 are cytoplasmic; that stretch reads MLQFLNRCSRGRGA. The helical transmembrane segment at 15–31 threads the bilayer; sequence WLLMALTAFLLELTALY. The Periplasmic portion of the chain corresponds to 32 to 49; that stretch reads FQHIMLLQPCVMCIYERV. The cysteines at positions 41 and 44 are disulfide-linked. The chain crosses the membrane as a helical span at residues 50–65; that stretch reads ALFGILGASLLGAIAP. Residues 66–71 lie on the Cytoplasmic side of the membrane; sequence RSPLRY. Residues 72-89 traverse the membrane as a helical segment; sequence LAIAVWIYSAWKGVQLAW. Residues 90-144 lie on the Periplasmic side of the membrane; it reads AHTMLQLNPSPFNTCDFFVNFPSWLPLDKWLPAVFAASGDCSERQWQFMSLEMPQ. Cys-104 and Cys-130 form a disulfide bridge. Residues 145 to 163 form a helical membrane-spanning segment; it reads WLVGIFAAYLVIAVLVLIS. Topologically, residues 164–176 are cytoplasmic; the sequence is QFVKPKRRDLFGR.

It belongs to the DsbB family.

Its subcellular location is the cell inner membrane. Functionally, required for disulfide bond formation in some periplasmic proteins. Acts by oxidizing the DsbA protein. The sequence is that of Disulfide bond formation protein B from Yersinia pestis bv. Antiqua (strain Nepal516).